Here is a 291-residue protein sequence, read N- to C-terminus: m-AAA protease-interacting protein 1, mitochondrial (291 aa).

The N-terminal 96 residues, 1–96, are a transit peptide targeting the mitochondrion; the sequence is MALAARLLPL…SLPASPSRSY (96 aa).

As to quaternary structure, interacts with AFG3L2. Interacts with SPG7. Interacts with SMDT1/EMRE (via the N-terminal transit peptide); interaction is direct and takes place before maturation of SMDT1/EMRE.

It is found in the mitochondrion matrix. Functionally, promotes sorting of SMDT1/EMRE in mitochondria by ensuring its maturation. Interacts with the transit peptide region of SMDT1/EMRE precursor protein in the mitochondrial matrix, leading to protect it against protein degradation by YME1L1, thereby ensuring SMDT1/EMRE maturation by the mitochondrial processing peptidase (PMPCA and PMPCB). The protein is m-AAA protease-interacting protein 1, mitochondrial of Mus musculus (Mouse).